Here is a 302-residue protein sequence, read N- to C-terminus: Protoheme IX farnesyltransferase (302 aa).

The next 9 membrane-spanning stretches (helical) occupy residues 28 to 48 (LALLMLTMYGAYFAGGGSLDP), 50 to 70 (MLALLTIMGFTSIGGVTAFNM), 93 to 115 (LNPYEALAGSLALVIAGVLSAAA), 119 to 138 (YVALTVIAGLYFDIIAYTQL), 147 to 167 (IIFGSIAGSMPALGGWAAAAG), 172 to 192 (GGVLMALIVFLWQPMHVWFLG), 219 to 239 (LIAVSLAGLIAVAWAFALYYG), 242 to 262 (FLTAVITTVLAALAISRIGGF), and 271 to 291 (ALKLFKFASPIIAVVFIILPL).

It belongs to the UbiA prenyltransferase family. Protoheme IX farnesyltransferase subfamily.

Its subcellular location is the cell membrane. It catalyses the reaction heme b + (2E,6E)-farnesyl diphosphate + H2O = Fe(II)-heme o + diphosphate. Its pathway is porphyrin-containing compound metabolism; heme O biosynthesis; heme O from protoheme: step 1/1. In terms of biological role, converts heme B (protoheme IX) to heme O by substitution of the vinyl group on carbon 2 of heme B porphyrin ring with a hydroxyethyl farnesyl side group. The sequence is that of Protoheme IX farnesyltransferase from Aeropyrum pernix (strain ATCC 700893 / DSM 11879 / JCM 9820 / NBRC 100138 / K1).